Reading from the N-terminus, the 194-residue chain is Inosine triphosphate pyrophosphatase (194 aa).

8–13 is an ITP binding site; it reads TGNANK. Glutamate 47 serves as a coordination point for Mg(2+). ITP is bound by residues lysine 59, 75-76, lysine 92, 151-154, lysine 174, and 179-180; these read DT, FGWD, and HR.

This sequence belongs to the HAM1 NTPase family. As to quaternary structure, homodimer. Requires Mg(2+) as cofactor. The cofactor is Mn(2+).

The protein resides in the cytoplasm. Its subcellular location is the nucleus. The enzyme catalyses ITP + H2O = IMP + diphosphate + H(+). It catalyses the reaction dITP + H2O = dIMP + diphosphate + H(+). It carries out the reaction XTP + H2O = XMP + diphosphate + H(+). Its function is as follows. Pyrophosphatase that hydrolyzes non-canonical purine nucleotides such as inosine triphosphate (ITP), deoxyinosine triphosphate (dITP) or xanthosine 5'-triphosphate (XTP) to their respective monophosphate derivatives. The enzyme does not distinguish between the deoxy- and ribose forms. Probably excludes non-canonical purines from RNA and DNA precursor pools, thus preventing their incorporation into RNA and DNA and avoiding chromosomal lesions. The protein is Inosine triphosphate pyrophosphatase of Scheffersomyces stipitis (strain ATCC 58785 / CBS 6054 / NBRC 10063 / NRRL Y-11545) (Yeast).